A 312-amino-acid polypeptide reads, in one-letter code: tRNA dimethylallyltransferase (312 aa).

11–18 (GPTAVGKT) contacts ATP. 13 to 18 (TAVGKT) contacts substrate. The interval 159 to 163 (QRVLR) is interaction with substrate tRNA.

It belongs to the IPP transferase family. In terms of assembly, monomer. It depends on Mg(2+) as a cofactor.

The enzyme catalyses adenosine(37) in tRNA + dimethylallyl diphosphate = N(6)-dimethylallyladenosine(37) in tRNA + diphosphate. Catalyzes the transfer of a dimethylallyl group onto the adenine at position 37 in tRNAs that read codons beginning with uridine, leading to the formation of N6-(dimethylallyl)adenosine (i(6)A). The protein is tRNA dimethylallyltransferase of Macrococcus caseolyticus (strain JCSC5402) (Macrococcoides caseolyticum).